We begin with the raw amino-acid sequence, 256 residues long: Major prion protein (256 aa).

Residues 1–24 (MVKSHIGSWILVLFVAMWSDVGLC) form the signal peptide. Residues 25 to 233 (KKRPKPGGGW…ESQAYYQRGA (209 aa)) are interaction with GRB2, ERI3 and SYN1. A disordered region spans residues 28-110 (PKPGGGWNTG…QWNKPSKPKT (83 aa)). A run of 5 repeats spans residues 54–62 (PQGGGGWGQ), 63–70 (PHGGGWGQ), 71–78 (PHGGGWGQ), 79–86 (PHGGGWGQ), and 87–95 (PHGGGGWGQ). Residues 54 to 95 (PQGGGGWGQPHGGGWGQPHGGGWGQPHGGGWGQPHGGGGWGQ) form a 5 X 8 AA tandem repeats of P-H-G-G-G-W-G-Q region. Residues 55–97 (QGGGGWGQPHGGGWGQPHGGGWGQPHGGGWGQPHGGGGWGQGG) are compositionally biased toward gly residues. Cu(2+)-binding residues include His-64, Gly-65, Gly-66, His-72, Gly-73, Gly-74, His-80, Gly-81, Gly-82, His-88, Gly-90, and Gly-91. Cysteines 182 and 217 form a disulfide. N-linked (GlcNAc...) (complex) asparagine glycosylation is found at Asn-184 and Asn-200. The GPI-anchor amidated alanine moiety is linked to residue Ala-233. Positions 234–256 (SVILFSSPPVILLISFLIFLIVG) are cleaved as a propeptide — removed in mature form.

The protein belongs to the prion family. Monomer and homodimer. Has a tendency to aggregate into amyloid fibrils containing a cross-beta spine, formed by a steric zipper of superposed beta-strands. Soluble oligomers may represent an intermediate stage on the path to fibril formation. Copper binding may promote oligomerization. Interacts with GRB2, APP, ERI3/PRNPIP and SYN1. Mislocalized cytosolically exposed PrP interacts with MGRN1; this interaction alters MGRN1 subcellular location and causes lysosomal enlargement. Interacts with KIAA1191.

The protein localises to the cell membrane. Its subcellular location is the golgi apparatus. Functionally, its primary physiological function is unclear. Has cytoprotective activity against internal or environmental stresses. May play a role in neuronal development and synaptic plasticity. May be required for neuronal myelin sheath maintenance. May play a role in iron uptake and iron homeostasis. Soluble oligomers are toxic to cultured neuroblastoma cells and induce apoptosis (in vitro). Association with GPC1 (via its heparan sulfate chains) targets PRNP to lipid rafts. Also provides Cu(2+) or Zn(2+) for the ascorbate-mediated GPC1 deaminase degradation of its heparan sulfate side chains. The polypeptide is Major prion protein (PRNP) (Ovis aries (Sheep)).